Reading from the N-terminus, the 416-residue chain is Exodeoxyribonuclease 7 large subunit (416 aa).

It belongs to the XseA family. In terms of assembly, heterooligomer composed of large and small subunits.

The protein localises to the cytoplasm. It carries out the reaction Exonucleolytic cleavage in either 5'- to 3'- or 3'- to 5'-direction to yield nucleoside 5'-phosphates.. In terms of biological role, bidirectionally degrades single-stranded DNA into large acid-insoluble oligonucleotides, which are then degraded further into small acid-soluble oligonucleotides. This is Exodeoxyribonuclease 7 large subunit from Acidothermus cellulolyticus (strain ATCC 43068 / DSM 8971 / 11B).